The chain runs to 1557 residues: DVA-1 polyprotein (1557 aa).

The N-terminal stretch at 1 to 21 (MKSTSFITLLLLSYFIVEAHS) is a signal peptide. Positions 22–60 (SIFHWDDERLFKHDDTHSWLTDVQKAELETLKHQPIQLR) are excised as a propeptide. A glycan (N-linked (GlcNAc...) asparagine) is linked at N997.

This sequence belongs to the NPA family. In terms of processing, nematode polyprotein allergens (NPAs) are synthesized as large polypeptides that are subsequently proteolytically cleaved to active polypeptide units.

Functionally, has high binding affinity for fatty acids and retinoids. This Dictyocaulus viviparus (Bovine lungworm) protein is DVA-1 polyprotein (DVA-1).